A 276-amino-acid chain; its full sequence is Pantothenate synthetase (276 aa).

27-34 (MGNLHDGH) contacts ATP. H34 functions as the Proton donor in the catalytic mechanism. Q58 contributes to the (R)-pantoate binding site. Position 58 (Q58) interacts with beta-alanine. 145–148 (GKKD) contributes to the ATP binding site. Q151 contributes to the (R)-pantoate binding site. ATP-binding positions include I174 and 182-185 (LSSR).

The protein belongs to the pantothenate synthetase family. Homodimer.

The protein localises to the cytoplasm. The catalysed reaction is (R)-pantoate + beta-alanine + ATP = (R)-pantothenate + AMP + diphosphate + H(+). The protein operates within cofactor biosynthesis; (R)-pantothenate biosynthesis; (R)-pantothenate from (R)-pantoate and beta-alanine: step 1/1. Functionally, catalyzes the condensation of pantoate with beta-alanine in an ATP-dependent reaction via a pantoyl-adenylate intermediate. This chain is Pantothenate synthetase, found in Aromatoleum aromaticum (strain DSM 19018 / LMG 30748 / EbN1) (Azoarcus sp. (strain EbN1)).